The sequence spans 591 residues: DDB1- and CUL4-associated factor 8 (591 aa).

Residues 1-14 (MSSKRPSTDGRRDL) are compositionally biased toward basic and acidic residues. The tract at residues 1 to 140 (MSSKRPSTDG…EDWVSSETTA (140 aa)) is disordered. 2 positions are modified to phosphoserine: serine 21 and serine 22. The short motif at 39–50 (IEVEASDLSLSL) is the Nuclear export signal element. 2 stretches are compositionally biased toward basic and acidic residues: residues 65 to 99 (RGTD…HGHS) and 118 to 131 (SRDQ…RALE). Phosphoserine is present on residues serine 99, serine 123, and serine 124. 7 WD repeats span residues 185 to 224 (GHTG…PVLD), 228 to 269 (GHKS…CCKN), 275 to 315 (QHKG…PASK), 323 to 363 (EKKV…ENEN), 379 to 418 (ESKA…GAQY), 426 to 466 (RNNA…IIQF), and 470 to 509 (DKGG…STEL). Arginine 198 bears the Omega-N-methylarginine; by PRMT1 mark. Positions 552–591 (HRRWREPGVGATDADSDESPSSSDTSDEEEGPDRVQCMPS) are disordered.

The protein belongs to the WD repeat DCAF8 family. Interacts with DDB1, CUL4A and CUL4B. Interacts with KPNA1, KPNB1 and XPO1.

The protein localises to the nucleus. Its subcellular location is the cytoplasm. It participates in protein modification; protein ubiquitination. Its function is as follows. May function as a substrate receptor for CUL4-DDB1 E3 ubiquitin-protein ligase complex. The chain is DDB1- and CUL4-associated factor 8 (Dcaf8) from Rattus norvegicus (Rat).